The sequence spans 229 residues: Large ribosomal subunit protein uL1c (229 aa).

Belongs to the universal ribosomal protein uL1 family. As to quaternary structure, part of the 50S ribosomal subunit.

It localises to the plastid. The protein resides in the chloroplast. Functionally, binds directly to 23S rRNA. Might be involved in E site tRNA release (Potential). This is Large ribosomal subunit protein uL1c (rpl1) from Pyropia yezoensis (Susabi-nori).